The sequence spans 526 residues: Lysine--tRNA ligase (526 aa).

Positions 44-52 match the 'HIGH' region motif; sequence PSGLPHIGT. Residues 290–294 carry the 'KMSKS' region motif; that stretch reads KISKS. Lys293 is an ATP binding site.

This sequence belongs to the class-I aminoacyl-tRNA synthetase family.

It localises to the cytoplasm. It carries out the reaction tRNA(Lys) + L-lysine + ATP = L-lysyl-tRNA(Lys) + AMP + diphosphate. The polypeptide is Lysine--tRNA ligase (Rickettsia typhi (strain ATCC VR-144 / Wilmington)).